The sequence spans 769 residues: Elongation factor G, mitochondrial (769 aa).

The N-terminal 42 residues, 1–42 (MSKFLRGISSISSASLKARASNFGVFHGVCSARNLHQSRLCL), are a transit peptide targeting the mitochondrion. A tr-type G domain is found at 74-356 (TRLRNIGVSA…AVVDYLPQPN (283 aa)). Residues 83–90 (AHIDSGKT), 154–158 (DTPGH), and 208–211 (NKMD) contribute to the GTP site.

Belongs to the TRAFAC class translation factor GTPase superfamily. Classic translation factor GTPase family. EF-G/EF-2 subfamily.

It localises to the mitochondrion. The protein operates within protein biosynthesis; polypeptide chain elongation. Functionally, mitochondrial GTPase that catalyzes the GTP-dependent ribosomal translocation step during translation elongation. During this step, the ribosome changes from the pre-translocational (PRE) to the post-translocational (POST) state as the newly formed A-site-bound peptidyl-tRNA and P-site-bound deacylated tRNA move to the P and E sites, respectively. Catalyzes the coordinated movement of the two tRNA molecules, the mRNA and conformational changes in the ribosome. This is Elongation factor G, mitochondrial from Debaryomyces hansenii (strain ATCC 36239 / CBS 767 / BCRC 21394 / JCM 1990 / NBRC 0083 / IGC 2968) (Yeast).